The sequence spans 747 residues: Elongation factor G, mitochondrial (747 aa).

The transit peptide at 1-16 directs the protein to the mitochondrion; it reads MSLIMRVLNGNLSLRL. The tr-type G domain maps to 42–319; sequence ERIRNIGISA…AIIDYLPNPG (278 aa). Residues 51-58, 118-122, and 172-175 each bind GTP; these read AHIDSGKT, DTPGH, and NKLD.

Belongs to the TRAFAC class translation factor GTPase superfamily. Classic translation factor GTPase family. EF-G/EF-2 subfamily.

Its subcellular location is the mitochondrion. The protein operates within protein biosynthesis; polypeptide chain elongation. Mitochondrial GTPase that catalyzes the GTP-dependent ribosomal translocation step during translation elongation. During this step, the ribosome changes from the pre-translocational (PRE) to the post-translocational (POST) state as the newly formed A-site-bound peptidyl-tRNA and P-site-bound deacylated tRNA move to the P and E sites, respectively. Catalyzes the coordinated movement of the two tRNA molecules, the mRNA and conformational changes in the ribosome. Essential during development as it acts as a retrograde signal from mitochondria to the nucleus to slow down cell proliferation if mitochondrial energy output is low. This Drosophila grimshawi (Hawaiian fruit fly) protein is Elongation factor G, mitochondrial.